A 139-amino-acid chain; its full sequence is ATP synthase epsilon chain (139 aa).

The protein belongs to the ATPase epsilon chain family. As to quaternary structure, F-type ATPases have 2 components, CF(1) - the catalytic core - and CF(0) - the membrane proton channel. CF(1) has five subunits: alpha(3), beta(3), gamma(1), delta(1), epsilon(1). CF(0) has three main subunits: a, b and c.

The protein resides in the cell inner membrane. Produces ATP from ADP in the presence of a proton gradient across the membrane. The polypeptide is ATP synthase epsilon chain (Salmonella arizonae (strain ATCC BAA-731 / CDC346-86 / RSK2980)).